Consider the following 394-residue polypeptide: Carbamoyl phosphate synthase small chain (394 aa).

The segment at 1–188 is CPSase; that stretch reads MIRKERAILA…ALPYAFPTLR (188 aa). L-glutamine is bound by residues S49, G240, and G242. One can recognise a Glutamine amidotransferase type-1 domain in the interval 192 to 379; the sequence is RVVLMDFGIK…IEEIDAFDGG (188 aa). Residue C267 is the Nucleophile of the active site. L-glutamine is bound by residues L268, Q271, N309, G311, and Y312. Catalysis depends on residues H352 and E354.

This sequence belongs to the CarA family. In terms of assembly, composed of two chains; the small (or glutamine) chain promotes the hydrolysis of glutamine to ammonia, which is used by the large (or ammonia) chain to synthesize carbamoyl phosphate. Tetramer of heterodimers (alpha,beta)4.

It carries out the reaction hydrogencarbonate + L-glutamine + 2 ATP + H2O = carbamoyl phosphate + L-glutamate + 2 ADP + phosphate + 2 H(+). The enzyme catalyses L-glutamine + H2O = L-glutamate + NH4(+). It functions in the pathway amino-acid biosynthesis; L-arginine biosynthesis; carbamoyl phosphate from bicarbonate: step 1/1. The protein operates within pyrimidine metabolism; UMP biosynthesis via de novo pathway; (S)-dihydroorotate from bicarbonate: step 1/3. Small subunit of the glutamine-dependent carbamoyl phosphate synthetase (CPSase). CPSase catalyzes the formation of carbamoyl phosphate from the ammonia moiety of glutamine, carbonate, and phosphate donated by ATP, constituting the first step of 2 biosynthetic pathways, one leading to arginine and/or urea and the other to pyrimidine nucleotides. The small subunit (glutamine amidotransferase) binds and cleaves glutamine to supply the large subunit with the substrate ammonia. The sequence is that of Carbamoyl phosphate synthase small chain from Deinococcus radiodurans (strain ATCC 13939 / DSM 20539 / JCM 16871 / CCUG 27074 / LMG 4051 / NBRC 15346 / NCIMB 9279 / VKM B-1422 / R1).